Consider the following 245-residue polypeptide: tRNA (guanine-N(7)-)-methyltransferase (245 aa).

S-adenosyl-L-methionine is bound by residues glutamate 69, glutamate 94, aspartate 121, and aspartate 144. Aspartate 144 is a catalytic residue. Residues lysine 148, aspartate 180, and 217–220 (TKFE) contribute to the substrate site. The tract at residues 200–225 (NLSSSGDYVPRPENRPKTKFERRGEG) is disordered. A compositionally biased stretch (basic and acidic residues) spans 209–225 (PRPENRPKTKFERRGEG).

Belongs to the class I-like SAM-binding methyltransferase superfamily. TrmB family.

It catalyses the reaction guanosine(46) in tRNA + S-adenosyl-L-methionine = N(7)-methylguanosine(46) in tRNA + S-adenosyl-L-homocysteine. Its pathway is tRNA modification; N(7)-methylguanine-tRNA biosynthesis. In terms of biological role, catalyzes the formation of N(7)-methylguanine at position 46 (m7G46) in tRNA. In Idiomarina loihiensis (strain ATCC BAA-735 / DSM 15497 / L2-TR), this protein is tRNA (guanine-N(7)-)-methyltransferase.